The sequence spans 992 residues: Sorting nexin-19 (992 aa).

One can recognise a PXA domain in the interval 95–272; the sequence is ERQLEREINR…VLVGIFSKAR (178 aa). The tract at residues 410–442 is disordered; the sequence is ALEPKDGEASEGAEAEEGPGTETETGLPVSTLN. Residues 418–428 show a composition bias toward acidic residues; it reads ASEGAEAEEGP. The PX domain occupies 533–663; the sequence is LRITGTITAR…EFLALNTDAR (131 aa). Positions 582 and 629 each coordinate a 1,2-diacyl-sn-glycero-3-phospho-(1D-myo-inositol-3-phosphate). 3 disordered regions span residues 692–726, 778–797, and 973–992; these read FPRSEPQSPTEELSEAETESKPQTEGKKASKSRLR, QPTKAPEKDPEQPPKGRVDS, and AATTSASDTPGNSKRMGVSS. Composition is skewed to basic and acidic residues over residues 709 to 719 and 782 to 795; these read TESKPQTEGKK and APEKDPEQPPKGRV. A compositionally biased stretch (polar residues) spans 980–992; it reads DTPGNSKRMGVSS.

It belongs to the sorting nexin family. Interacts with PTPRN.

The protein resides in the early endosome membrane. It localises to the cytoplasmic vesicle membrane. In terms of biological role, plays a role in intracellular vesicle trafficking and exocytosis. May play a role in maintaining insulin-containing dense core vesicles in pancreatic beta-cells and in preventing their degradation. May play a role in insulin secretion. Interacts with membranes containing phosphatidylinositol 3-phosphate (PtdIns(3P)). The chain is Sorting nexin-19 (SNX19) from Homo sapiens (Human).